The following is a 583-amino-acid chain: Aspartate--tRNA(Asp/Asn) ligase (583 aa).

Glu171 contacts L-aspartate. The interval 195–198 (QLFK) is aspartate. Arg217 is a binding site for L-aspartate. ATP-binding positions include 217–219 (RDE) and Gln226. His443 is an L-aspartate binding site. Glu476 provides a ligand contact to ATP. Arg483 is an L-aspartate binding site. 528–531 (GLDR) contributes to the ATP binding site.

Belongs to the class-II aminoacyl-tRNA synthetase family. Type 1 subfamily. In terms of assembly, homodimer.

It is found in the cytoplasm. The catalysed reaction is tRNA(Asx) + L-aspartate + ATP = L-aspartyl-tRNA(Asx) + AMP + diphosphate. Its function is as follows. Aspartyl-tRNA synthetase with relaxed tRNA specificity since it is able to aspartylate not only its cognate tRNA(Asp) but also tRNA(Asn). Reaction proceeds in two steps: L-aspartate is first activated by ATP to form Asp-AMP and then transferred to the acceptor end of tRNA(Asp/Asn). The sequence is that of Aspartate--tRNA(Asp/Asn) ligase from Ruthia magnifica subsp. Calyptogena magnifica.